The chain runs to 542 residues: Chaperonin GroEL (542 aa).

Residues 29-32, 86-90, Gly413, 476-478, and Asp492 contribute to the ATP site; these read TLGP, DGTTT, and NAA.

This sequence belongs to the chaperonin (HSP60) family. In terms of assembly, forms a cylinder of 14 subunits composed of two heptameric rings stacked back-to-back. Interacts with the co-chaperonin GroES.

Its subcellular location is the cytoplasm. It carries out the reaction ATP + H2O + a folded polypeptide = ADP + phosphate + an unfolded polypeptide.. In terms of biological role, together with its co-chaperonin GroES, plays an essential role in assisting protein folding. The GroEL-GroES system forms a nano-cage that allows encapsulation of the non-native substrate proteins and provides a physical environment optimized to promote and accelerate protein folding. The polypeptide is Chaperonin GroEL (Streptococcus mutans serotype c (strain ATCC 700610 / UA159)).